Here is a 378-residue protein sequence, read N- to C-terminus: Zinc transporter 7 (378 aa).

The Cytoplasmic portion of the chain corresponds to 1–37; sequence MLPLSIKDDEYKPPKFNLFGKISGWFRSILSDKTSRN. A helical membrane pass occupies residues 38–58; the sequence is LFFFLCLNLSFAFVELLYGIW. Residues 59-67 lie on the Lumenal side of the membrane; sequence SNCLGLISD. A helical transmembrane segment spans residues 68–88; sequence SFHMFFDSTAILAGLAASVIS. Residues 89–102 are Cytoplasmic-facing; it reads KWRDNDAFSYGYVR. The helical transmembrane segment at 103–123 threads the bilayer; it reads AEVLAGFVNGLFLIFTAFFIF. At 124–140 the chain is on the lumenal side; it reads SEGVERALAPPDVHHER. A helical membrane pass occupies residues 141–161; that stretch reads LLLVSILGFVVNLVGIFVFNH. Residues 161 to 220 form a his-rich loop region; it reads HGGHGHSHGSGHGHSHSLFNGALDHSHGHEDHCHSHGAKHGGAHSHDHDHAHGHGHLHSH. Residues 162–238 lie on the Cytoplasmic side of the membrane; it reads GGHGHSHGSG…AGPSRQILQG (77 aa). Residues 186–228 are disordered; the sequence is SHGHEDHCHSHGAKHGGAHSHDHDHAHGHGHLHSHDGPSFKET. The span at 204–224 shows a compositional bias: basic and acidic residues; it reads HSHDHDHAHGHGHLHSHDGPS. Residues 239 to 259 traverse the membrane as a helical segment; that stretch reads VFLHILADTLGSIGVIASAIM. Over 260–264 the chain is Lumenal; sequence MQNFG. Residues 265–285 traverse the membrane as a helical segment; that stretch reads LMIADPICSILIAILIVVSVI. Topologically, residues 286–378 are cytoplasmic; it reads PLLRESIGIL…LYVQIDFAAM (93 aa).

The protein belongs to the cation diffusion facilitator (CDF) transporter (TC 2.A.4) family. SLC30A subfamily. In terms of assembly, homooligomer.

The protein localises to the golgi apparatus membrane. Its subcellular location is the cytoplasmic vesicle. It localises to the golgi apparatus. It is found in the trans-Golgi network. The protein resides in the sarcoplasmic reticulum. The protein localises to the mitochondrion. It carries out the reaction Zn(2+)(in) = Zn(2+)(out). Zinc ion transporter mediating zinc entry from the cytosol into the lumen of organelles along the secretory pathway. By contributing to zinc ion homeostasis within the early secretory pathway, regulates the activation and folding of enzymes like alkaline phosphatases. In Rattus norvegicus (Rat), this protein is Zinc transporter 7.